The chain runs to 308 residues: Transcriptional adapter 1-2 (308 aa).

It belongs to the TADA1 family. As to quaternary structure, component of the Spt-Ada-Gcn5 acetyltransferase (SAGA) complex consisting of wda/Taf5L, Saf6, Taf9, Taf10b, Taf12, Ada1, Spt3, Spt7, Spt20, Sf3b3, Sf3b5, Nipped-A/Tra1, a histone acetyltransferase (HAT) module made up of Gcn5, Ada2b (Isoform B), Ada3 and Sgf29, and a deubiquitinase (DUB) module made up of not/nonstop, Sgf11 and e(y)2 tethered to SAGA by Atxn7. Not a component of the Ada2a-containing ATAC complex.

Its subcellular location is the nucleus. Functionally, component of the transcription regulatory complex SAGA, a multiprotein complex that activates transcription by remodeling chromatin and mediating histone acetylation and deubiquitination. The SAGA complex predominantly acetylates histone H3. The polypeptide is Transcriptional adapter 1-2 (Drosophila melanogaster (Fruit fly)).